Consider the following 254-residue polypeptide: 5'-nucleotidase SurE (254 aa).

A divalent metal cation contacts are provided by D8, D9, S38, and N91.

The protein belongs to the SurE nucleotidase family. The cofactor is a divalent metal cation.

The protein localises to the cytoplasm. It catalyses the reaction a ribonucleoside 5'-phosphate + H2O = a ribonucleoside + phosphate. Nucleotidase that shows phosphatase activity on nucleoside 5'-monophosphates. This Anaeromyxobacter dehalogenans (strain 2CP-1 / ATCC BAA-258) protein is 5'-nucleotidase SurE.